The chain runs to 347 residues: Globoside alpha-1,3-N-acetylgalactosaminyltransferase 1 (347 aa).

Residues 1–5 lie on the Cytoplasmic side of the membrane; that stretch reads MHRRR. A helical; Signal-anchor for type II membrane protein membrane pass occupies residues 6 to 26; the sequence is LALGLGFCLLAGTSLSVLWVY. Topologically, residues 27 to 347 are lumenal; the sequence is LENWLPVSYV…LDKDISCLRS (321 aa). The N-linked (GlcNAc...) asparagine glycan is linked to N108. Residues 116 to 121, 206 to 208, and 228 to 231 contribute to the substrate site; these read FAVGKY, DVD, and HPSY. 2 residues coordinate Mn(2+): D206 and D208. The active-site Nucleophile is the E298.

The protein belongs to the glycosyltransferase 6 family. Mn(2+) serves as cofactor. Widely expressed. Expressed at higher level in placenta, ovary and peripheral blood leukocyte, whereas it is weakly expressed in liver, thymus, and testis. Expressed in bone marrow erythroid cells.

Its subcellular location is the golgi apparatus membrane. The protein operates within protein modification; protein glycosylation. Has lost the ability to synthesize Forssman glycolipid antigen (FORS1/FG). Might have acquired an alternative function in glycosphingolipid metabolism, but it remains to be established. It appears to have drifted more slowly than confirmed pseudogenes in the glycosyltransferase 6 family, suggesting that it has remained under evolutionary pressure. In Homo sapiens (Human), this protein is Globoside alpha-1,3-N-acetylgalactosaminyltransferase 1.